The chain runs to 60 residues: Rubredoxin 4 (60 aa).

The Rubredoxin-like domain occupies 4 to 55; it reads YKLYQCAQCGFEYDEAVGWPEDGIEPGTRWDDIPEDWSCPDCGAAKSDFFMV. Positions 9, 12, 42, and 45 each coordinate Fe cation.

This sequence belongs to the rubredoxin family. Requires Fe(3+) as cofactor.

Functionally, involved in the hydrocarbon hydroxylating system, which transfers electrons from NADH to rubredoxin reductase and then through rubredoxin to alkane 1 monooxygenase. This is Rubredoxin 4 (rubA4) from Rhodococcus sp. (strain Q15).